Consider the following 43-residue polypeptide: DeltaKappa-actitoxin-Avd4b (43 aa).

3 cysteine pairs are disulfide-bonded: C4-C39, C6-C32, and C22-C40.

It belongs to the sea anemone type 3 (BDS) potassium channel toxin family.

The protein resides in the secreted. It is found in the nematocyst. Acts as a gating modifier on both Kv and Nav ion channels. Voltage-dependently inhibits voltage-gated potassium channels Kv3 (Kv3.1/KCNC1, Kv3.2/KCNC2 and Kv3.4/KCNC4). Slows inactivation of the voltage-gated sodium channel Nav1.7/SCN9A. Inhibits all Kv3.1, Kv3.2 and Kv3.4 by about 50% when tested at a voltage of +40 mV. May act by binding residues in voltage-sensing domains S3b and S4 of Kv3. Tests have been done on human Nav1.7/SCN9A and rat SCG neurons that mostly carry Nav1.7 channels (EC(50)=300 nM). This toxin also reduces blood pressure. This chain is DeltaKappa-actitoxin-Avd4b, found in Anemonia sulcata (Mediterranean snakelocks sea anemone).